The primary structure comprises 250 residues: 2,3-bisphosphoglycerate-dependent phosphoglycerate mutase (250 aa).

Substrate contacts are provided by residues 10–17 (RHGESQWN), 23–24 (TG), Arg-62, 89–92 (ERHY), Lys-100, 116–117 (RR), and 185–186 (GN). Residue His-11 is the Tele-phosphohistidine intermediate of the active site. Glu-89 functions as the Proton donor/acceptor in the catalytic mechanism.

The protein belongs to the phosphoglycerate mutase family. BPG-dependent PGAM subfamily. In terms of assembly, homodimer.

It carries out the reaction (2R)-2-phosphoglycerate = (2R)-3-phosphoglycerate. It participates in carbohydrate degradation; glycolysis; pyruvate from D-glyceraldehyde 3-phosphate: step 3/5. In terms of biological role, catalyzes the interconversion of 2-phosphoglycerate and 3-phosphoglycerate. This chain is 2,3-bisphosphoglycerate-dependent phosphoglycerate mutase, found in Salmonella choleraesuis (strain SC-B67).